A 149-amino-acid polypeptide reads, in one-letter code: Deoxyuridine 5'-triphosphate nucleotidohydrolase (149 aa).

Residues 70-72 (RSG), Asn83, and 87-89 (LID) each bind substrate.

The protein belongs to the dUTPase family. The cofactor is Mg(2+).

The enzyme catalyses dUTP + H2O = dUMP + diphosphate + H(+). The protein operates within pyrimidine metabolism; dUMP biosynthesis; dUMP from dCTP (dUTP route): step 2/2. In terms of biological role, this enzyme is involved in nucleotide metabolism: it produces dUMP, the immediate precursor of thymidine nucleotides and it decreases the intracellular concentration of dUTP so that uracil cannot be incorporated into DNA. The polypeptide is Deoxyuridine 5'-triphosphate nucleotidohydrolase (Blochmanniella pennsylvanica (strain BPEN)).